Here is a 252-residue protein sequence, read N- to C-terminus: Probable transcriptional regulatory protein Haur_3030 (252 aa).

Belongs to the TACO1 family.

It is found in the cytoplasm. In Herpetosiphon aurantiacus (strain ATCC 23779 / DSM 785 / 114-95), this protein is Probable transcriptional regulatory protein Haur_3030.